A 372-amino-acid chain; its full sequence is Tetraacyldisaccharide 4'-kinase (372 aa).

Position 60–67 (60–67 (TVGGSGKT)) interacts with ATP.

This sequence belongs to the LpxK family.

The enzyme catalyses a lipid A disaccharide + ATP = a lipid IVA + ADP + H(+). It functions in the pathway glycolipid biosynthesis; lipid IV(A) biosynthesis; lipid IV(A) from (3R)-3-hydroxytetradecanoyl-[acyl-carrier-protein] and UDP-N-acetyl-alpha-D-glucosamine: step 6/6. Functionally, transfers the gamma-phosphate of ATP to the 4'-position of a tetraacyldisaccharide 1-phosphate intermediate (termed DS-1-P) to form tetraacyldisaccharide 1,4'-bis-phosphate (lipid IVA). In Psychrobacter cryohalolentis (strain ATCC BAA-1226 / DSM 17306 / VKM B-2378 / K5), this protein is Tetraacyldisaccharide 4'-kinase.